A 33-amino-acid polypeptide reads, in one-letter code: Nigrocin-1 (33 aa).

The cysteines at positions 27 and 33 are disulfide-linked.

Belongs to the frog skin active peptide (FSAP) family. Brevinin subfamily. In terms of tissue distribution, expressed by the skin dorsal glands.

It is found in the secreted. In terms of biological role, shows antibacterial activity against both Gram-positive and Gram-negative bacteria and against the fungus C.albicans. Has no hemolytic activity. This chain is Nigrocin-1, found in Pelophylax nigromaculatus (Black-spotted frog).